Here is a 312-residue protein sequence, read N- to C-terminus: Fibrinogen-like protein 1 (312 aa).

The first 22 residues, 1–22 (MAKVFSFILVTTALTMGREISA), serve as a signal peptide directing secretion. A coiled-coil region spans residues 23–61 (LEDCAQEQMRLRAQVRLLETRVKQQQVKIKQLLQENEVQ). A Fibrinogen C-terminal domain is found at 74–306 (LGSKRQYADC…SVVMKIRPND (233 aa)). Intrachain disulfides connect Cys-83/Cys-112 and Cys-248/Cys-261.

As to quaternary structure, homodimer. Interacts (via the Fibrinogen C-terminal domain) with LAG3 (via Ig-like domains 1 and 2). As to expression, under normal conditions, liver-specific.

Its subcellular location is the secreted. Functionally, immune suppressive molecule that inhibits antigen-specific T-cell activation by acting as a major ligand of LAG3. Responsible for LAG3 T-cell inhibitory function. Binds LAG3 independently from MHC class II (MHC-II). Secreted by, and promotes growth of, hepatocytes. This Homo sapiens (Human) protein is Fibrinogen-like protein 1.